The sequence spans 96 residues: Small ribosomal subunit protein bS6 (96 aa).

Belongs to the bacterial ribosomal protein bS6 family.

Its function is as follows. Binds together with bS18 to 16S ribosomal RNA. This chain is Small ribosomal subunit protein bS6, found in Natranaerobius thermophilus (strain ATCC BAA-1301 / DSM 18059 / JW/NM-WN-LF).